The chain runs to 241 residues: Ribosome-recycling factor, mitochondrial (241 aa).

It belongs to the RRF family.

Its subcellular location is the mitochondrion. In terms of biological role, necessary for protein synthesis in mitochondria. Functions as a ribosome recycling factor in mitochondria. The sequence is that of Ribosome-recycling factor, mitochondrial (RRF1) from Kluyveromyces lactis (strain ATCC 8585 / CBS 2359 / DSM 70799 / NBRC 1267 / NRRL Y-1140 / WM37) (Yeast).